The following is a 342-amino-acid chain: MLEISPWETLVKLLTDSLLNCTGTHEDVPHAKTFLRSLTTTYIASLAVATAVTVGTVCLAVLHLIYIHFYITHSSRRLHIVLLACTAPLVSLLALVAMYMPRVWFLSHLLSFLYFSFALWVIICLLLHIFDGHHALVTKMMQRLQYVEIATPPFCCLFPCLPKVRLEGKKIRWCELMVMQAPIVRLFATLVSLVIYFEYQDQGLVPLKVLDFITLPSLLAGIYGTHILVTTVSRMDELISYRYVVVFRLLDFFFMVFGLQQPVFDFLARYGAFGCGTVLPAIETSFYWKNFFTVIEAFCVTLISTVLLQPSKSSFFDKHPSCRSMSSARSTITDVDTDESTT.

The Extracellular portion of the chain corresponds to 1-50 (MLEISPWETLVKLLTDSLLNCTGTHEDVPHAKTFLRSLTTTYIASLAVAT). An N-linked (GlcNAc...) asparagine glycan is attached at Asn-20. The chain crosses the membrane as a helical span at residues 51–71 (AVTVGTVCLAVLHLIYIHFYI). Residues 72-79 (THSSRRLH) lie on the Cytoplasmic side of the membrane. The helical transmembrane segment at 80–100 (IVLLACTAPLVSLLALVAMYM) threads the bilayer. Topologically, residues 101–109 (PRVWFLSHL) are extracellular. A helical membrane pass occupies residues 110 to 130 (LSFLYFSFALWVIICLLLHIF). At 131–176 (DGHHALVTKMMQRLQYVEIATPPFCCLFPCLPKVRLEGKKIRWCEL) the chain is on the cytoplasmic side. The chain crosses the membrane as a helical span at residues 177–197 (MVMQAPIVRLFATLVSLVIYF). Over 198 to 208 (EYQDQGLVPLK) the chain is Extracellular. Residues 209–229 (VLDFITLPSLLAGIYGTHILV) form a helical membrane-spanning segment. Over 230–243 (TTVSRMDELISYRY) the chain is Cytoplasmic. A helical membrane pass occupies residues 244–264 (VVVFRLLDFFFMVFGLQQPVF). Residues 265–290 (DFLARYGAFGCGTVLPAIETSFYWKN) are Extracellular-facing. The chain crosses the membrane as a helical span at residues 291–311 (FFTVIEAFCVTLISTVLLQPS). The Cytoplasmic portion of the chain corresponds to 312-342 (KSSFFDKHPSCRSMSSARSTITDVDTDESTT).

Belongs to the OST-alpha family.

It localises to the cell membrane. Probable transporter. The sequence is that of Organic solute transporter alpha-like protein 2 (osta-2) from Caenorhabditis elegans.